The sequence spans 138 residues: Dual specificity phosphatase ibp1 (138 aa).

The region spanning 19–133 (SPNEISIIDV…WKRRYGGQQG (115 aa)) is the Rhodanese domain. Catalysis depends on Cys70, which acts as the Phosphocysteine intermediate.

The protein belongs to the MPI phosphatase family.

It localises to the cytoplasm. The protein resides in the nucleus. It catalyses the reaction O-phospho-L-tyrosyl-[protein] + H2O = L-tyrosyl-[protein] + phosphate. May play a role in DNA replication checkpoint via regulation of hsk1 or may act downstream of hsk1 in an S phase regulatory pathway. The chain is Dual specificity phosphatase ibp1 (ibp1) from Schizosaccharomyces pombe (strain 972 / ATCC 24843) (Fission yeast).